The following is a 268-amino-acid chain: Resolvase (268 aa).

Residues 47-250 form the Tyr recombinase domain; that stretch reads ELPKYLLAPE…FALDVAARHR (204 aa). Residues R82, K114, H202, R205, and H228 contribute to the active site. The O-(3'-phospho-DNA)-tyrosine intermediate role is filled by Y237.

It belongs to the 'phage' integrase family.

In terms of biological role, acts as a repressor of transcription and as a site-specific resolvase that cleaves at the RfsF site. This is Resolvase (resD) from Escherichia coli (strain K12).